We begin with the raw amino-acid sequence, 253 residues long: 5'/3'-nucleotidase SurE (253 aa).

4 residues coordinate a divalent metal cation: Asp-8, Asp-9, Ser-39, and Asn-92.

This sequence belongs to the SurE nucleotidase family. The cofactor is a divalent metal cation.

It localises to the cytoplasm. It carries out the reaction a ribonucleoside 5'-phosphate + H2O = a ribonucleoside + phosphate. The catalysed reaction is a ribonucleoside 3'-phosphate + H2O = a ribonucleoside + phosphate. The enzyme catalyses [phosphate](n) + H2O = [phosphate](n-1) + phosphate + H(+). Nucleotidase with a broad substrate specificity as it can dephosphorylate various ribo- and deoxyribonucleoside 5'-monophosphates and ribonucleoside 3'-monophosphates with highest affinity to 3'-AMP. Also hydrolyzes polyphosphate (exopolyphosphatase activity) with the preference for short-chain-length substrates (P20-25). Might be involved in the regulation of dNTP and NTP pools, and in the turnover of 3'-mononucleotides produced by numerous intracellular RNases (T1, T2, and F) during the degradation of various RNAs. In Salmonella arizonae (strain ATCC BAA-731 / CDC346-86 / RSK2980), this protein is 5'/3'-nucleotidase SurE.